Reading from the N-terminus, the 877-residue chain is Neurotrypsin (877 aa).

Positions 1–20 are cleaved as a signal peptide; it reads MTLARFVLALVLGALPEVVS. Asparagine 26 is a glycosylation site (N-linked (GlcNAc...) asparagine). A disordered region spans residues 31 to 90; sequence HRHRHRHSPPPGLQYPYYLPTQQRPPRTRPPPPLPRFPRPPRALPAQRPHALQAGHTPRP. Residues 44–55 are compositionally biased toward low complexity; sequence QYPYYLPTQQRP. Over residues 58–73 the composition is skewed to pro residues; that stretch reads TRPPPPLPRFPRPPRA. A Kringle domain is found at 95 to 167; the sequence is CPAGEPWVSV…GKVDWGYCDC (73 aa). 20 disulfide bridges follow: cysteine 95-cysteine 167, cysteine 111-cysteine 151, cysteine 140-cysteine 165, cysteine 197-cysteine 261, cysteine 210-cysteine 271, cysteine 241-cysteine 251, cysteine 307-cysteine 371, cysteine 320-cysteine 381, cysteine 351-cysteine 361, cysteine 414-cysteine 477, cysteine 427-cysteine 487, cysteine 457-cysteine 467, cysteine 527-cysteine 591, cysteine 540-cysteine 601, cysteine 571-cysteine 581, cysteine 621-cysteine 752, cysteine 663-cysteine 679, cysteine 767-cysteine 833, cysteine 796-cysteine 810, and cysteine 823-cysteine 852. 4 consecutive SRCR domains span residues 172 to 273, 282 to 383, 389 to 489, and 502 to 603; these read VRLR…TCSF, IRLV…SCTP, IRLA…ACYP, and VRLM…ICDY. The zymogen activation region stretch occupies residues 621 to 632; that stretch reads CGLRLLHRRQKR. The region spanning 633–876 is the Peptidase S1 domain; it reads IIGGKNSLRG…FVPWIKSVTK (244 aa). Histidine 678 acts as the Charge relay system in catalysis. Residue asparagine 685 is glycosylated (N-linked (GlcNAc...) asparagine). Residue aspartate 728 is the Charge relay system of the active site. Residue serine 827 is the Charge relay system of the active site.

The protein belongs to the peptidase S1 family.

It is found in the secreted. In terms of biological role, plays a role in neuronal plasticity and the proteolytic action may subserve structural reorganizations associated with learning and memory operations. The sequence is that of Neurotrypsin (PRSS12) from Pongo pygmaeus (Bornean orangutan).